The sequence spans 795 residues: Phenylalanine--tRNA ligase beta subunit (795 aa).

Residues 39–148 (AGSFHGVVVG…ADAPIGTDIR (110 aa)) enclose the tRNA-binding domain. Residues 401–476 (PKRATITLRR…RVYGYNNIPD (76 aa)) enclose the B5 domain. Positions 454, 460, 463, and 464 each coordinate Mg(2+). Residues 701 to 794 (SRFPANRRDI…LKERFQASLR (94 aa)) form the FDX-ACB domain.

This sequence belongs to the phenylalanyl-tRNA synthetase beta subunit family. Type 1 subfamily. Tetramer of two alpha and two beta subunits. Mg(2+) is required as a cofactor.

It is found in the cytoplasm. The catalysed reaction is tRNA(Phe) + L-phenylalanine + ATP = L-phenylalanyl-tRNA(Phe) + AMP + diphosphate + H(+). In Shigella flexneri, this protein is Phenylalanine--tRNA ligase beta subunit.